We begin with the raw amino-acid sequence, 336 residues long: MYYPFVRKALFQLDPERAHELTFQQLRRITGTPLEALVRQKVQEKPVQCMGLTFKNPLGLAAGLDKNGECIDALGAMGFGSIEVGTVTPRPQAGNDKPRLFRLVEAEGLINRMGFNNHGVDHLIENVKKAHFDGVLGINIGKNKDTPVEQGKDDYLICMEKVYAYAGYIAVNISSPNTPGLRTLQYGEALDDLLSAIKNKQNELQEIHHKYVPVAVKIAPDLSVEELIQVADSLVRHNIDGVIATNTTLDRSLVNGMKHCDEMGGLSGRPVQLKSTEIIRALSAELKGRLPIIGVGGIDSVIAAREKMAAGATLVQIYSGFIFKGPQLIKEIVNHI.

Residues 62–66 and threonine 86 each bind FMN; that span reads AGLDK. Lysine 66 lines the substrate pocket. Substrate is bound at residue 111–115; it reads NRMGF. Residues asparagine 139 and asparagine 172 each contribute to the FMN site. Position 172 (asparagine 172) interacts with substrate. The active-site Nucleophile is serine 175. Asparagine 177 serves as a coordination point for substrate. FMN contacts are provided by lysine 217 and threonine 245. 246-247 lines the substrate pocket; sequence NT. Residues glycine 268, glycine 297, and 318–319 each bind FMN; that span reads YS.

This sequence belongs to the dihydroorotate dehydrogenase family. Type 2 subfamily. As to quaternary structure, monomer. It depends on FMN as a cofactor.

It is found in the cell membrane. It catalyses the reaction (S)-dihydroorotate + a quinone = orotate + a quinol. It participates in pyrimidine metabolism; UMP biosynthesis via de novo pathway; orotate from (S)-dihydroorotate (quinone route): step 1/1. Catalyzes the conversion of dihydroorotate to orotate with quinone as electron acceptor. The polypeptide is Dihydroorotate dehydrogenase (quinone) (Enterobacter sp. (strain 638)).